Here is a 53-residue protein sequence, read N- to C-terminus: Large ribosomal subunit protein eL40 (53 aa).

This sequence belongs to the eukaryotic ribosomal protein eL40 family.

In Pyrobaculum islandicum (strain DSM 4184 / JCM 9189 / GEO3), this protein is Large ribosomal subunit protein eL40.